We begin with the raw amino-acid sequence, 102 residues long: Small ribosomal subunit protein uS10 (102 aa).

This sequence belongs to the universal ribosomal protein uS10 family. As to quaternary structure, part of the 30S ribosomal subunit.

Involved in the binding of tRNA to the ribosomes. The sequence is that of Small ribosomal subunit protein uS10 from Salinispora tropica (strain ATCC BAA-916 / DSM 44818 / JCM 13857 / NBRC 105044 / CNB-440).